A 235-amino-acid chain; its full sequence is Ribonuclease S-2 (235 aa).

The first 31 residues, 1–31 (MATVQKSQHSHFFLLVGCIVHLSNFCSTTTA), serve as a signal peptide directing secretion. Gln-41 is an RNA binding site. An intrachain disulfide couples Cys-47 to Cys-54. His-66 contacts RNA. His-66 (proton donor) is an active-site residue. N-linked (GlcNAc...) asparagine glycosylation occurs at Asn-72. Cystine bridges form between Cys-80/Cys-129, Cys-189/Cys-217, and Cys-200/Cys-211. Residues 105–106 (DL), Arg-108, and Phe-118 each bind RNA. Gln-122 is an active-site residue. RNA is bound at residue 125–126 (KH). His-126 serves as the catalytic Proton acceptor.

The protein belongs to the RNase T2 family.

Its subcellular location is the secreted. It is found in the extracellular space. The enzyme catalyses a ribonucleotidyl-ribonucleotide-RNA + H2O = a 3'-end 3'-phospho-ribonucleotide-RNA + a 5'-end dephospho-ribonucleoside-RNA + H(+). Its function is as follows. Self-incompatibility (SI) is the inherited ability of a flowering plant to prevent self-fertilization by discriminating between self and non-self pollen during pollination. In many species, self-incompatibility is controlled by the single, multiallelic locus S. The sequence is that of Ribonuclease S-2 (S2) from Antirrhinum hispanicum (Snapdragon).